A 137-amino-acid chain; its full sequence is 1,4-dihydroxy-2-naphthoyl-CoA hydrolase (137 aa).

Asp-13 is an active-site residue.

It belongs to the 4-hydroxybenzoyl-CoA thioesterase family. DHNA-CoA hydrolase subfamily.

The enzyme catalyses 1,4-dihydroxy-2-naphthoyl-CoA + H2O = 1,4-dihydroxy-2-naphthoate + CoA + H(+). It participates in cofactor biosynthesis; phylloquinone biosynthesis. Its pathway is quinol/quinone metabolism; 1,4-dihydroxy-2-naphthoate biosynthesis; 1,4-dihydroxy-2-naphthoate from chorismate: step 7/7. Functionally, catalyzes the hydrolysis of 1,4-dihydroxy-2-naphthoyl-CoA (DHNA-CoA) to 1,4-dihydroxy-2-naphthoate (DHNA), a reaction involved in phylloquinone (vitamin K1) biosynthesis. This Crocosphaera subtropica (strain ATCC 51142 / BH68) (Cyanothece sp. (strain ATCC 51142)) protein is 1,4-dihydroxy-2-naphthoyl-CoA hydrolase.